Reading from the N-terminus, the 334-residue chain is Immune-associated nucleotide-binding protein 3 (334 aa).

Residues 11–219 (KAVKNIVLVG…FRGKMYLEIK (209 aa)) form the AIG1-type G domain. A G1 region spans residues 20 to 27 (GRTGNGKS). GTP is bound by residues 20–28 (GRTGNGKSA) and Ser41. Residues 47 to 51 (GVTKT) form a G2 region. The G3 stretch occupies residues 69–72 (DTPG). The interval 139–142 (TGGD) is G4. The segment at 178 to 180 (NNM) is G5. Position 179 (Asn179) interacts with GTP. The stretch at 272 to 306 (SAAHERMVSMLNENLENAHRENIDLRKAHDHEQKK) forms a coiled coil.

Belongs to the TRAFAC class TrmE-Era-EngA-EngB-Septin-like GTPase superfamily. AIG1/Toc34/Toc159-like paraseptin GTPase family. IAN subfamily. In terms of tissue distribution, mostly expressed in pollen. Also detected in lateral roots and radicles.

The protein is Immune-associated nucleotide-binding protein 3 of Arabidopsis thaliana (Mouse-ear cress).